The following is a 117-amino-acid chain: uncharacterized protein (117 aa).

This is an uncharacterized protein from Escherichia coli (strain K12).